A 272-amino-acid polypeptide reads, in one-letter code: Neurogenin-2 (272 aa).

Residues 30 to 69 (LTPLSSSADEEEEEEPGASGGARRQRGAEAGQGARGGVAA) form a disordered region. Residues 112–164 (TRRLKANNRERNRMHNLNAALDALREVLPTFPEDAKLTKIETLRFAHNYIWAL) form the bHLH domain. Positions 197–239 (ASAALSSSGDSPSPASTWSCTNSPAPSSSVSSNSTSPYSCTLS) are enriched in low complexity. The interval 197–264 (ASAALSSSGD…PPDKHRYAPH (68 aa)) is disordered.

As to quaternary structure, efficient DNA binding requires dimerization with another bHLH protein.

It localises to the nucleus. Functionally, transcriptional regulator. Involved in neuronal differentiation. Activates transcription by binding to the E box (5'-CANNTG-3'). This Homo sapiens (Human) protein is Neurogenin-2 (NEUROG2).